A 75-amino-acid polypeptide reads, in one-letter code: Porwaprin-d (75 aa).

A signal peptide spans Met1 to Ser24. One can recognise a WAP domain in the interval Arg27–Ile72. Intrachain disulfides connect Cys34–Cys60, Cys43–Cys64, Cys47–Cys59, and Cys53–Cys68.

Belongs to the venom waprin family. As to expression, expressed by the venom gland.

The protein localises to the secreted. Damages membranes of susceptible bacteria. Has no hemolytic activity. Not toxic to mice. Does not inhibit the proteinases elastase and cathepsin G. This chain is Porwaprin-d, found in Pseudechis porphyriacus (Red-bellied black snake).